Consider the following 325-residue polypeptide: Germination protease (325 aa).

Positions 1–7 are excised as a propeptide; the sequence is MYNVRTD.

It belongs to the peptidase A25 family. In terms of assembly, homotetramer. In terms of processing, autoproteolytically processed. The inactive tetrameric zymogen termed p46 autoprocesses to a smaller form termed p41, which is active only during spore germination.

It carries out the reaction Endopeptidase action with P4 Glu or Asp, P1 preferably Glu &gt; Asp, P1' hydrophobic and P2' Ala.. Functionally, initiates the rapid degradation of small, acid-soluble proteins during spore germination. This chain is Germination protease, found in Clostridium perfringens (strain SM101 / Type A).